A 242-amino-acid chain; its full sequence is Glucosamine-6-phosphate deaminase (242 aa).

The active-site Proton acceptor; for enolization step is Asp-67. The active-site For ring-opening step is the Asn-137. The Proton acceptor; for ring-opening step role is filled by His-139. The active-site For ring-opening step is the Glu-144.

Belongs to the glucosamine/galactosamine-6-phosphate isomerase family. NagB subfamily.

The catalysed reaction is alpha-D-glucosamine 6-phosphate + H2O = beta-D-fructose 6-phosphate + NH4(+). The protein operates within amino-sugar metabolism; N-acetylneuraminate degradation; D-fructose 6-phosphate from N-acetylneuraminate: step 5/5. In terms of biological role, catalyzes the reversible isomerization-deamination of glucosamine 6-phosphate (GlcN6P) to form fructose 6-phosphate (Fru6P) and ammonium ion. The polypeptide is Glucosamine-6-phosphate deaminase (Staphylococcus haemolyticus (strain JCSC1435)).